The chain runs to 151 residues: Small ribosomal subunit protein uS15 (151 aa).

The disordered stretch occupies residues 1–20 (MGRMHSNGKGISGSSLPYNR).

The protein belongs to the universal ribosomal protein uS15 family. As to quaternary structure, component of the small ribosomal subunit. Part of the small subunit (SSU) processome, composed of more than 70 proteins and the RNA chaperone small nucleolar RNA (snoRNA) U3.

The protein resides in the cytoplasm. The protein localises to the nucleus. It localises to the nucleolus. Its function is as follows. Component of the small ribosomal subunit. The ribosome is a large ribonucleoprotein complex responsible for the synthesis of proteins in the cell. Part of the small subunit (SSU) processome, first precursor of the small eukaryotic ribosomal subunit. During the assembly of the SSU processome in the nucleolus, many ribosome biogenesis factors, an RNA chaperone and ribosomal proteins associate with the nascent pre-rRNA and work in concert to generate RNA folding, modifications, rearrangements and cleavage as well as targeted degradation of pre-ribosomal RNA by the RNA exosome. The polypeptide is Small ribosomal subunit protein uS15 (rps13) (Dictyostelium discoideum (Social amoeba)).